Here is a 196-residue protein sequence, read N- to C-terminus: MSAVQLYLASGSPRRQELLTQLGYQFERVVVDVEECHQPSETAEQYVQRLSRDKATAGVKKINATKTAVATMPVLGADTIVVVDETILEKPKDFNDAQRMLNLLSGRQHQVMTSVTVATVEREETQLVVTDVWFKTLSEKEIEKYWQSGEPQDKAGSYGIQGLGGKFITRIEGSYYAVMGLPLVETDVMVQNFLNL.

The active-site Proton acceptor is D78.

The protein belongs to the Maf family. YhdE subfamily. A divalent metal cation is required as a cofactor.

The protein localises to the cytoplasm. It carries out the reaction dTTP + H2O = dTMP + diphosphate + H(+). The catalysed reaction is UTP + H2O = UMP + diphosphate + H(+). Nucleoside triphosphate pyrophosphatase that hydrolyzes dTTP and UTP. May have a dual role in cell division arrest and in preventing the incorporation of modified nucleotides into cellular nucleic acids. This is dTTP/UTP pyrophosphatase from Photobacterium profundum (strain SS9).